The chain runs to 457 residues: Glutamyl-tRNA reductase (457 aa).

Substrate contacts are provided by residues 49–52, Ser-109, 114–116, and Gln-120; these read TCNR and ETQ. Cys-50 functions as the Nucleophile in the catalytic mechanism. 189–194 provides a ligand contact to NADP(+); it reads GAGKMG.

The protein belongs to the glutamyl-tRNA reductase family. In terms of assembly, homodimer.

The catalysed reaction is (S)-4-amino-5-oxopentanoate + tRNA(Glu) + NADP(+) = L-glutamyl-tRNA(Glu) + NADPH + H(+). Its pathway is porphyrin-containing compound metabolism; protoporphyrin-IX biosynthesis; 5-aminolevulinate from L-glutamyl-tRNA(Glu): step 1/2. Functionally, catalyzes the NADPH-dependent reduction of glutamyl-tRNA(Glu) to glutamate 1-semialdehyde (GSA). This is Glutamyl-tRNA reductase from Oceanobacillus iheyensis (strain DSM 14371 / CIP 107618 / JCM 11309 / KCTC 3954 / HTE831).